Here is a 410-residue protein sequence, read N- to C-terminus: Elongation factor Tu (410 aa).

The tr-type G domain occupies Lys10–Glu214. A G1 region spans residues Gly19–Thr26. GTP is bound at residue Gly19–Thr26. Residue Thr26 participates in Mg(2+) binding. Residues Gly60–Asn64 are G2. Residues Asp81 to Gly84 form a G3 region. GTP contacts are provided by residues Asp81–His85 and Asn136–Asp139. The interval Asn136–Asp139 is G4. The interval Ser174–Leu176 is G5.

The protein belongs to the TRAFAC class translation factor GTPase superfamily. Classic translation factor GTPase family. EF-Tu/EF-1A subfamily. As to quaternary structure, monomer.

Its subcellular location is the cytoplasm. The catalysed reaction is GTP + H2O = GDP + phosphate + H(+). GTP hydrolase that promotes the GTP-dependent binding of aminoacyl-tRNA to the A-site of ribosomes during protein biosynthesis. The polypeptide is Elongation factor Tu (Gloeothece citriformis (strain PCC 7424) (Cyanothece sp. (strain PCC 7424))).